The sequence spans 333 residues: MRVLGIETSCDETGVAIYDSESGLLADQLYSQVKLHAQYGGVVPELASRDHIRKIVPLIQATLKEACVSPQEIDAVAYTAGPGLIGALLVGASVGRALAFAWNVPAVPVHHMEAHLLAPMLEDQVPDFPFIALLVSGGHTQLVQVNAIGKYALLGESLDDAVGEAFDKTAKLLGLEYPGGAMLAHLAQQGDPDRFIFPRPMIDRPGLDFSFSGLKTAAALTIRANHQDEQTRCDIAYAFEKAVIDTLAIKSERALEQTGLTRLVLAGGVSANEKLRSKLSVIMHERQGKVFYARPQFCTDNGAMIAYAGWRRIQEGSRSDLSISVHPKWALSQ.

2 residues coordinate Fe cation: His-111 and His-115. Residues 134–138, Asp-167, Gly-180, and Asn-272 contribute to the substrate site; that span reads LVSGG. Asp-300 lines the Fe cation pocket.

The protein belongs to the KAE1 / TsaD family. Requires Fe(2+) as cofactor.

It is found in the cytoplasm. The enzyme catalyses L-threonylcarbamoyladenylate + adenosine(37) in tRNA = N(6)-L-threonylcarbamoyladenosine(37) in tRNA + AMP + H(+). Functionally, required for the formation of a threonylcarbamoyl group on adenosine at position 37 (t(6)A37) in tRNAs that read codons beginning with adenine. Is involved in the transfer of the threonylcarbamoyl moiety of threonylcarbamoyl-AMP (TC-AMP) to the N6 group of A37, together with TsaE and TsaB. TsaD likely plays a direct catalytic role in this reaction. The sequence is that of tRNA N6-adenosine threonylcarbamoyltransferase from Hamiltonella defensa subsp. Acyrthosiphon pisum (strain 5AT).